The sequence spans 451 residues: Tubulin beta-1 chain (451 aa).

The short motif at 1–4 (MREI) is the MREI motif element. GTP contacts are provided by Gln-11, Glu-69, Ser-138, Gly-142, Thr-143, and Gly-144. Glu-69 serves as a coordination point for Mg(2+). Residue Ser-172 is modified to Phosphoserine; by CDK1. Residues Asn-204 and Asn-226 each coordinate GTP. Residues 430-451 (AGLEDSEEDVEEAEVEAEDKDH) form a disordered region. A compositionally biased stretch (acidic residues) spans 433 to 451 (EDSEEDVEEAEVEAEDKDH). Ser-435 carries the phosphoserine modification. Glu-440 carries the post-translational modification 5-glutamyl polyglutamate.

Belongs to the tubulin family. Dimer of alpha and beta chains. A typical microtubule is a hollow water-filled tube with an outer diameter of 25 nm and an inner diameter of 15 nM. Alpha-beta heterodimers associate head-to-tail to form protofilaments running lengthwise along the microtubule wall with the beta-tubulin subunit facing the microtubule plus end conferring a structural polarity. Microtubules usually have 13 protofilaments but different protofilament numbers can be found in some organisms and specialized cells. Interacts with RANBP10. Requires Mg(2+) as cofactor. Post-translationally, some glutamate residues at the C-terminus are polyglycylated, resulting in polyglycine chains on the gamma-carboxyl group. Glycylation is mainly limited to tubulin incorporated into axonemes (cilia and flagella) whereas glutamylation is prevalent in neuronal cells, centrioles, axonemes, and the mitotic spindle. Both modifications can coexist on the same protein on adjacent residues, and lowering polyglycylation levels increases polyglutamylation, and reciprocally. Cilia and flagella glycylation is required for their stability and maintenance. Flagella glycylation controls sperm motility. In terms of processing, some glutamate residues at the C-terminus are polyglutamylated, resulting in polyglutamate chains on the gamma-carboxyl group. Polyglutamylation plays a key role in microtubule severing by spastin (SPAST). SPAST preferentially recognizes and acts on microtubules decorated with short polyglutamate tails: severing activity by SPAST increases as the number of glutamates per tubulin rises from one to eight, but decreases beyond this glutamylation threshold. Glutamylation is also involved in cilia motility. Phosphorylated on Ser-172 by CDK1 during the cell cycle, from metaphase to telophase, but not in interphase. This phosphorylation inhibits tubulin incorporation into microtubules.

It localises to the cytoplasm. Its subcellular location is the cytoskeleton. Functionally, tubulin is the major constituent of microtubules, a cylinder consisting of laterally associated linear protofilaments composed of alpha- and beta-tubulin heterodimers. Microtubules grow by the addition of GTP-tubulin dimers to the microtubule end, where a stabilizing cap forms. Below the cap, tubulin dimers are in GDP-bound state, owing to GTPase activity of alpha-tubulin. The polypeptide is Tubulin beta-1 chain (Tubb1) (Mus musculus (Mouse)).